A 617-amino-acid polypeptide reads, in one-letter code: Autophagy-related protein 20 (617 aa).

Residues 1–83 (MWNDEDNNPY…KRKPGGYDSR (83 aa)) form a disordered region. Residues 20-31 (QSSSINPTSPST) are compositionally biased toward low complexity. Over residues 48 to 58 (DNEHNHGVIHD) the composition is skewed to basic and acidic residues. Residues 59 to 68 (DSDDDDEDLT) show a composition bias toward acidic residues. A PX domain is found at 89–209 (YENPKLSILI…RFFDPNASWS (121 aa)). A 1,2-diacyl-sn-glycero-3-phospho-(1D-myo-inositol-3-phosphate) is bound by residues Arg-126, Ser-128, Lys-152, and Arg-175. Residues 403-440 (QQDLTTEELSKKRALLDQLEQSEAEARRIENYLSSSQQ) adopt a coiled-coil conformation. A disordered region spans residues 434–516 (YLSSSQQISP…SGNSITNKIF (83 aa)). Over residues 454–463 (PPSHQRRDGS) the composition is skewed to basic and acidic residues. A compositionally biased stretch (polar residues) spans 480–500 (DFSSHTPSASQGLPERSTSVP).

Belongs to the sorting nexin family. As to quaternary structure, forms a complex with SNX4/ATG24 and ATG17.

It is found in the endosome membrane. The protein localises to the preautophagosomal structure membrane. Required for cytoplasm to vacuole transport (Cvt), pexophagy and mitophagy. Also involved in endoplasmic reticulum-specific autophagic process and is essential for the survival of cells subjected to severe ER stress. Functions in protein retrieval from the endocytic pathway. Required for proper sorting of the v-SNARE protein SNC1. Autophagy is required for proper vegetative growth, asexual/sexual reproduction, and full virulence. Autophagy is particularly involved in the biosynthesis of deoxynivalenol (DON), an important virulence determinant. In Gibberella zeae (strain ATCC MYA-4620 / CBS 123657 / FGSC 9075 / NRRL 31084 / PH-1) (Wheat head blight fungus), this protein is Autophagy-related protein 20.